The chain runs to 365 residues: Cytoplasmic tRNA 2-thiolation protein 1 (365 aa).

Belongs to the TtcA family. CTU1/NCS6/ATPBD3 subfamily.

The protein resides in the cytoplasm. It functions in the pathway tRNA modification; 5-methoxycarbonylmethyl-2-thiouridine-tRNA biosynthesis. In terms of biological role, plays a central role in 2-thiolation of mcm(5)S(2)U at tRNA wobble positions of tRNA(Lys), tRNA(Glu) and tRNA(Gln). Directly binds tRNAs and probably acts by catalyzing adenylation of tRNAs, an intermediate required for 2-thiolation. It is unclear whether it acts as a sulfurtransferase that transfers sulfur from thiocarboxylated URM1 onto the uridine of tRNAs at wobble position. Prior mcm(5) tRNA modification by the elongator complex is required for 2-thiolation. May also be involved in protein urmylation. The protein is Cytoplasmic tRNA 2-thiolation protein 1 of Yarrowia lipolytica (strain CLIB 122 / E 150) (Yeast).